A 118-amino-acid polypeptide reads, in one-letter code: UPF0344 protein Aflv_2205 (118 aa).

4 helical membrane passes run 4–24 (AHIT…ALQA), 32–52 (MLHM…AWIL), 60–80 (FLYI…EMIL), and 96–116 (FIVA…GFSF).

The protein belongs to the UPF0344 family.

It localises to the cell membrane. The protein is UPF0344 protein Aflv_2205 of Anoxybacillus flavithermus (strain DSM 21510 / WK1).